Reading from the N-terminus, the 143-residue chain is Large ribosomal subunit protein uL11 (143 aa).

It belongs to the universal ribosomal protein uL11 family. In terms of assembly, part of the ribosomal stalk of the 50S ribosomal subunit. Interacts with L10 and the large rRNA to form the base of the stalk. L10 forms an elongated spine to which L12 dimers bind in a sequential fashion forming a multimeric L10(L12)X complex. In terms of processing, one or more lysine residues are methylated.

In terms of biological role, forms part of the ribosomal stalk which helps the ribosome interact with GTP-bound translation factors. The polypeptide is Large ribosomal subunit protein uL11 (Pseudomonas putida (strain ATCC 700007 / DSM 6899 / JCM 31910 / BCRC 17059 / LMG 24140 / F1)).